The chain runs to 277 residues: MKQLYGVIGNPIGHSLSPVMHNDAFEHLNMDAHYHAFLVKEEVLGEAVRGLKALGISGFNVTTPHKVAIMDYLDEIDPLAKQIGAVNTVVHKNGKLTGYNTDGIGFVRALQSISSEPLQEKRILLLGAGGASRAIYFSLADAGVKEIDVANRTVDKAKELIAACTATVHSVALSLEKATKEQGSYDIIIQTTTIGMHPRVEHTPLQISSLKKGTIVSDIIYNPFETKILCEAKEQGAIIQNGIDMFVYQGALAFEMWTGCVPNIERMKQLVIRKLGG.

Shikimate is bound by residues 15–17 (SLS) and T62. Catalysis depends on K66, which acts as the Proton acceptor. The shikimate site is built by N87 and D102. NADP(+) is bound by residues 127-131 (GAGGA), 151-156 (NRTVDK), and I219. Shikimate is bound at residue Y221. G242 contributes to the NADP(+) binding site.

Belongs to the shikimate dehydrogenase family. In terms of assembly, homodimer.

It carries out the reaction shikimate + NADP(+) = 3-dehydroshikimate + NADPH + H(+). Its pathway is metabolic intermediate biosynthesis; chorismate biosynthesis; chorismate from D-erythrose 4-phosphate and phosphoenolpyruvate: step 4/7. Functionally, involved in the biosynthesis of the chorismate, which leads to the biosynthesis of aromatic amino acids. Catalyzes the reversible NADPH linked reduction of 3-dehydroshikimate (DHSA) to yield shikimate (SA). This is Shikimate dehydrogenase (NADP(+)) from Bacillus cereus (strain 03BB102).